We begin with the raw amino-acid sequence, 604 residues long: Sulfite reductase [NADPH] flavoprotein alpha-component (604 aa).

In terms of domain architecture, Flavodoxin-like spans 66–204 (VTVLSASQTG…AADGWTGRIV (139 aa)). FMN contacts are provided by residues 72-77 (SQTGNA), 119-122 (STQG), and 155-164 (LGDSSYPNFC). Residues 212-231 (AKNRATPAPQTTPPAGLQTA) are disordered. A compositionally biased stretch (low complexity) spans 216–231 (ATPAPQTTPPAGLQTA). Residues 239–453 (ADPFPAALLA…VERNDGFRLP (215 aa)) enclose the FAD-binding FR-type domain. FAD is bound by residues T327, Q361, 391–394 (RLYS), 409–411 (TVG), and 424–427 (GGAS). NADP(+) is bound by residues 524-525 (SR), 530-534 (KIYVQ), and D566. Y604 is an FAD binding site.

It belongs to the NADPH-dependent sulphite reductase flavoprotein subunit CysJ family. The protein in the N-terminal section; belongs to the flavodoxin family. In the C-terminal section; belongs to the flavoprotein pyridine nucleotide cytochrome reductase family. In terms of assembly, alpha(8)-beta(8). The alpha component is a flavoprotein, the beta component is a hemoprotein. Requires FAD as cofactor. FMN is required as a cofactor.

It carries out the reaction hydrogen sulfide + 3 NADP(+) + 3 H2O = sulfite + 3 NADPH + 4 H(+). It functions in the pathway sulfur metabolism; hydrogen sulfide biosynthesis; hydrogen sulfide from sulfite (NADPH route): step 1/1. Functionally, component of the sulfite reductase complex that catalyzes the 6-electron reduction of sulfite to sulfide. This is one of several activities required for the biosynthesis of L-cysteine from sulfate. The flavoprotein component catalyzes the electron flow from NADPH -&gt; FAD -&gt; FMN to the hemoprotein component. The polypeptide is Sulfite reductase [NADPH] flavoprotein alpha-component (Neisseria meningitidis serogroup C / serotype 2a (strain ATCC 700532 / DSM 15464 / FAM18)).